Here is a 644-residue protein sequence, read N- to C-terminus: Translation factor GUF1, mitochondrial (644 aa).

The transit peptide at 1-14 directs the protein to the mitochondrion; that stretch reads MLRKAFRYLVPVRC. Residues 46–227 form the tr-type G domain; it reads ERYRNFSIVA…AIVDRIPPPT (182 aa). GTP is bound by residues 55-62, 120-124, and 174-177; these read AHVDHGKS, DTPGH, and NKID.

Belongs to the TRAFAC class translation factor GTPase superfamily. Classic translation factor GTPase family. LepA subfamily.

It is found in the mitochondrion inner membrane. It catalyses the reaction GTP + H2O = GDP + phosphate + H(+). In terms of biological role, promotes mitochondrial protein synthesis. May act as a fidelity factor of the translation reaction, by catalyzing a one-codon backward translocation of tRNAs on improperly translocated ribosomes. Binds to mitochondrial ribosomes in a GTP-dependent manner. This chain is Translation factor GUF1, mitochondrial, found in Eremothecium gossypii (strain ATCC 10895 / CBS 109.51 / FGSC 9923 / NRRL Y-1056) (Yeast).